The sequence spans 346 residues: D-alanine--D-alanine ligase (346 aa).

Residues 133–327 (KLYAKSVGVK…TLADQIPLEK (195 aa)) form the ATP-grasp domain. Position 159 to 211 (159 to 211 (LRFPCIIKPARLGSSIGISIVKDEKDLEYAKDVGFEFDNDLVVEEFKNNIKEY)) interacts with ATP. Positions 284, 296, and 298 each coordinate Mg(2+).

The protein belongs to the D-alanine--D-alanine ligase family. Mg(2+) is required as a cofactor. The cofactor is Mn(2+).

The protein localises to the cytoplasm. The catalysed reaction is 2 D-alanine + ATP = D-alanyl-D-alanine + ADP + phosphate + H(+). The protein operates within cell wall biogenesis; peptidoglycan biosynthesis. Functionally, cell wall formation. The sequence is that of D-alanine--D-alanine ligase from Campylobacter jejuni subsp. doylei (strain ATCC BAA-1458 / RM4099 / 269.97).